Consider the following 225-residue polypeptide: Uracil-DNA glycosylase (225 aa).

Catalysis depends on D65, which acts as the Proton acceptor.

The protein belongs to the uracil-DNA glycosylase (UDG) superfamily. UNG family.

The protein localises to the cytoplasm. It catalyses the reaction Hydrolyzes single-stranded DNA or mismatched double-stranded DNA and polynucleotides, releasing free uracil.. Functionally, excises uracil residues from the DNA which can arise as a result of misincorporation of dUMP residues by DNA polymerase or due to deamination of cytosine. The protein is Uracil-DNA glycosylase of Bacillus cereus (strain AH187).